The sequence spans 510 residues: Bifunctional purine biosynthesis protein PurH (510 aa).

One can recognise an MGS-like domain in the interval 1-142 (MRALLSVSDK…KNFKDVLIVT (142 aa)).

This sequence belongs to the PurH family.

The catalysed reaction is (6R)-10-formyltetrahydrofolate + 5-amino-1-(5-phospho-beta-D-ribosyl)imidazole-4-carboxamide = 5-formamido-1-(5-phospho-D-ribosyl)imidazole-4-carboxamide + (6S)-5,6,7,8-tetrahydrofolate. It carries out the reaction IMP + H2O = 5-formamido-1-(5-phospho-D-ribosyl)imidazole-4-carboxamide. Its pathway is purine metabolism; IMP biosynthesis via de novo pathway; 5-formamido-1-(5-phospho-D-ribosyl)imidazole-4-carboxamide from 5-amino-1-(5-phospho-D-ribosyl)imidazole-4-carboxamide (10-formyl THF route): step 1/1. It functions in the pathway purine metabolism; IMP biosynthesis via de novo pathway; IMP from 5-formamido-1-(5-phospho-D-ribosyl)imidazole-4-carboxamide: step 1/1. In Campylobacter concisus (strain 13826), this protein is Bifunctional purine biosynthesis protein PurH.